The chain runs to 56 residues: Large ribosomal subunit protein bL32 (56 aa).

Positions 1–56 (MAVPARRTSKAKKNKRRTHKGLTTPGLSRDSETGEYRMSHRISPDGTYKGRTIIEK) are disordered. Residues 7-20 (RTSKAKKNKRRTHK) show a composition bias toward basic residues. A compositionally biased stretch (basic and acidic residues) spans 29 to 38 (RDSETGEYRM).

The protein belongs to the bacterial ribosomal protein bL32 family.

The protein is Large ribosomal subunit protein bL32 of Listeria monocytogenes serotype 4a (strain HCC23).